Here is a 348-residue protein sequence, read N- to C-terminus: Isopentenyl-diphosphate delta-isomerase (348 aa).

Substrate is bound at residue 5-6; it reads RK. FMN is bound by residues Ser61, 62–64, Ser92, and Asn120; that span reads SMT. 92–94 provides a ligand contact to substrate; it reads SMR. Gln159 lines the substrate pocket. Mg(2+) is bound at residue Glu160. FMN-binding positions include Lys189, Ser214, Thr219, 269-271, and 290-291; these read GLR and AR.

The protein belongs to the IPP isomerase type 2 family. Homooctamer. Dimer of tetramers. FMN serves as cofactor. It depends on NADPH as a cofactor. Requires Mg(2+) as cofactor.

It is found in the cytoplasm. The enzyme catalyses isopentenyl diphosphate = dimethylallyl diphosphate. Functionally, involved in the biosynthesis of isoprenoids. Catalyzes the 1,3-allylic rearrangement of the homoallylic substrate isopentenyl (IPP) to its allylic isomer, dimethylallyl diphosphate (DMAPP). This is Isopentenyl-diphosphate delta-isomerase from Thermoplasma acidophilum (strain ATCC 25905 / DSM 1728 / JCM 9062 / NBRC 15155 / AMRC-C165).